The sequence spans 88 residues: ATP synthase F(0) complex subunit f, mitochondrial (88 aa).

A2 is modified (N-acetylalanine). S3 carries the post-translational modification Phosphoserine. The residue at position 16 (K16) is an N6-acetyllysine. The helical transmembrane segment at 62 to 79 (MVLAAYVVFSYCISYKEL) threads the bilayer.

It belongs to the ATPase F chain family. As to quaternary structure, component of the ATP synthase complex composed at least of ATP5F1A/subunit alpha, ATP5F1B/subunit beta, ATP5MC1/subunit c (homooctomer), MT-ATP6/subunit a, MT-ATP8/subunit 8, ATP5ME/subunit e, ATP5MF/subunit f, ATP5MG/subunit g, ATP5MK/subunit k, ATP5MJ/subunit j, ATP5F1C/subunit gamma, ATP5F1D/subunit delta, ATP5F1E/subunit epsilon, ATP5PF/subunit F6, ATP5PB/subunit b, ATP5PD/subunit d, ATP5PO/subunit OSCP. ATP synthase complex consists of a soluble F(1) head domain (subunits alpha(3) and beta(3)) - the catalytic core - and a membrane F(0) domain - the membrane proton channel (subunits c, a, 8, e, f, g, k and j). These two domains are linked by a central stalk (subunits gamma, delta, and epsilon) rotating inside the F1 region and a stationary peripheral stalk (subunits F6, b, d, and OSCP).

Its subcellular location is the mitochondrion. The protein localises to the mitochondrion inner membrane. Subunit f, of the mitochondrial membrane ATP synthase complex (F(1)F(0) ATP synthase or Complex V) that produces ATP from ADP in the presence of a proton gradient across the membrane which is generated by electron transport complexes of the respiratory chain. ATP synthase complex consist of a soluble F(1) head domain - the catalytic core - and a membrane F(1) domain - the membrane proton channel. These two domains are linked by a central stalk rotating inside the F(1) region and a stationary peripheral stalk. During catalysis, ATP synthesis in the catalytic domain of F(1) is coupled via a rotary mechanism of the central stalk subunits to proton translocation. In vivo, can only synthesize ATP although its ATP hydrolase activity can be activated artificially in vitro. Part of the complex F(0) domain. The chain is ATP synthase F(0) complex subunit f, mitochondrial from Mus musculus (Mouse).